Consider the following 239-residue polypeptide: MSTPLSLFVTGTDTEIGKTFVSAALLHGFARHGLRAAAMKPVAAGAYERDGVWRNEDADQLDAAASVVLPPELRTPFLLKAPAAPHIVAAHEHVTLDIDTIVACHRDALTRADIVVVEGVGGFRVPLNDTQDTADLAVALGLPVVLVVGMRLGCISHALLTADAIAARGLTLAGWVANHVDPAMTYADENVATIRDWLAREHRAPLLGRIAHMAPADPESAAATLDIAALVDTLRAAQR.

Position 15–20 (15–20) interacts with ATP; it reads EIGKTF. Residue Thr-19 participates in Mg(2+) binding. Residue Lys-40 is part of the active site. ATP-binding positions include Asp-57, 118–121, and 178–179; these read EGVG and NH. 2 residues coordinate Mg(2+): Asp-57 and Glu-118.

The protein belongs to the dethiobiotin synthetase family. In terms of assembly, homodimer. Requires Mg(2+) as cofactor.

Its subcellular location is the cytoplasm. It catalyses the reaction (7R,8S)-7,8-diammoniononanoate + CO2 + ATP = (4R,5S)-dethiobiotin + ADP + phosphate + 3 H(+). It participates in cofactor biosynthesis; biotin biosynthesis; biotin from 7,8-diaminononanoate: step 1/2. In terms of biological role, catalyzes a mechanistically unusual reaction, the ATP-dependent insertion of CO2 between the N7 and N8 nitrogen atoms of 7,8-diaminopelargonic acid (DAPA, also called 7,8-diammoniononanoate) to form a ureido ring. The polypeptide is ATP-dependent dethiobiotin synthetase BioD (Burkholderia multivorans (strain ATCC 17616 / 249)).